A 113-amino-acid chain; its full sequence is UPF0122 protein Lreu_1156 (113 aa).

This sequence belongs to the UPF0122 family.

Its function is as follows. Might take part in the signal recognition particle (SRP) pathway. This is inferred from the conservation of its genetic proximity to ftsY/ffh. May be a regulatory protein. This is UPF0122 protein Lreu_1156 from Limosilactobacillus reuteri (strain DSM 20016) (Lactobacillus reuteri).